A 249-amino-acid chain; its full sequence is Coproheme decarboxylase (249 aa).

Fe-coproporphyrin III contacts are provided by residues arginine 131, 145–149 (YPMDK), histidine 172, and glutamine 185. Tyrosine 145 is a catalytic residue.

It belongs to the ChdC family. Type 1 subfamily. Fe-coproporphyrin III serves as cofactor.

It catalyses the reaction Fe-coproporphyrin III + 2 H2O2 + 2 H(+) = heme b + 2 CO2 + 4 H2O. The catalysed reaction is Fe-coproporphyrin III + H2O2 + H(+) = harderoheme III + CO2 + 2 H2O. The enzyme catalyses harderoheme III + H2O2 + H(+) = heme b + CO2 + 2 H2O. It participates in porphyrin-containing compound metabolism; protoheme biosynthesis. In terms of biological role, involved in coproporphyrin-dependent heme b biosynthesis. Catalyzes the decarboxylation of Fe-coproporphyrin III (coproheme) to heme b (protoheme IX), the last step of the pathway. The reaction occurs in a stepwise manner with a three-propionate intermediate. This Staphylococcus epidermidis (strain ATCC 35984 / DSM 28319 / BCRC 17069 / CCUG 31568 / BM 3577 / RP62A) protein is Coproheme decarboxylase.